A 420-amino-acid polypeptide reads, in one-letter code: Protein translocase subunit SecY (420 aa).

Transmembrane regions (helical) follow at residues 9 to 29 (ILIT…PIPG), 61 to 81 (LSII…MELL), 104 to 124 (IVRY…SVGL), 141 to 161 (VFMI…MWIG), 173 to 193 (ISLI…SGTF), 203 to 223 (ILML…IIYV), 257 to 277 (LSGV…STIL), 300 to 320 (YNIL…SIVF), 355 to 375 (KLTL…WILV), and 377 to 397 (AMGV…QVAI).

It belongs to the SecY/SEC61-alpha family. Component of the Sec protein translocase complex. Heterotrimer consisting of SecY, SecE and SecG subunits. The heterotrimers can form oligomers, although 1 heterotrimer is thought to be able to translocate proteins. Interacts with the ribosome. Interacts with SecDF, and other proteins may be involved. Interacts with SecA.

The protein localises to the cell inner membrane. The central subunit of the protein translocation channel SecYEG. Consists of two halves formed by TMs 1-5 and 6-10. These two domains form a lateral gate at the front which open onto the bilayer between TMs 2 and 7, and are clamped together by SecE at the back. The channel is closed by both a pore ring composed of hydrophobic SecY resides and a short helix (helix 2A) on the extracellular side of the membrane which forms a plug. The plug probably moves laterally to allow the channel to open. The ring and the pore may move independently. This chain is Protein translocase subunit SecY, found in Helicobacter pylori (strain J99 / ATCC 700824) (Campylobacter pylori J99).